Consider the following 505-residue polypeptide: Cytochrome P450 9b1 (505 aa).

Cys449 provides a ligand contact to heme.

It belongs to the cytochrome P450 family. The cofactor is heme.

It is found in the endoplasmic reticulum membrane. It localises to the microsome membrane. Its function is as follows. May be involved in the metabolism of insect hormones and in the breakdown of synthetic insecticides. The sequence is that of Cytochrome P450 9b1 (Cyp9b1) from Drosophila melanogaster (Fruit fly).